The sequence spans 229 residues: Large ribosomal subunit protein uL1 (229 aa).

This sequence belongs to the universal ribosomal protein uL1 family. Part of the 50S ribosomal subunit.

In terms of biological role, binds directly to 23S rRNA. The L1 stalk is quite mobile in the ribosome, and is involved in E site tRNA release. Functionally, protein L1 is also a translational repressor protein, it controls the translation of the L11 operon by binding to its mRNA. The sequence is that of Large ribosomal subunit protein uL1 from Ureaplasma parvum serovar 3 (strain ATCC 27815 / 27 / NCTC 11736).